An 811-amino-acid polypeptide reads, in one-letter code: MDQDYEELRAKFTKIGLNETTVKDTLKNKKLSSSLNKVIEETNVGSSGCDRTIGNLLFTLANASLKQKDPKSNAHEAFIASKIVSGDLKTNLQVNAAITYCKDKDTIDESEFDKETGVGVVLTPEQIEQLVGDYVAENKSKILEQRYQLLNPSASALRQHALLKWAPQLEVKQTLDRKFLELLGPKTEQDAAAGKKKGAKAKNSKQKTVDSGKAKEQKIVSEQSKKYNMFEEGFLAKLHKPGGNTQLIPERMKEHLQATGGGVVTRFPPEPNGYLHIGHSKAIAVNFGFARYHNGVCYLRFDDTNPEAEEERYFESIKDLVAWLGFQPYKITYSSDYFDKLYELAEELIKRDKAYVCHCTDAEIKKARGGEERGPRYACVHRDRPIEESLLEFRNMRDGKYQPKEAILRMKQDLSDGNPQMWDLIAYRVLNSPHPRTGDKWKIYPTYDFTHCLVDSFENISHSLCTTEFILSRVSYEWLCNALEVYCPAQREYGRLNVVGTLMSKRKIMKLVKEGYVHGWNDPRLYTLVALRRRGVPPGAILEFVSEVGVTTAVSNIEVARFENCVRKFLENSVPRLMFLPDPIKVTLENLDDSYREQIEIPFNPKDPSMGSRSAFLTKHIYIDRSDFREEASSDFFRLTLGQPVGLFRASHPVVAKRVVKNDEGEPIEIIAEYDASSSKKPKTFIQWVSRDKESNSPVLIAETRLFNNLFKCDNPAALKEQELAAQLNPESEVVLKNSIIEPGIYDLIKSAPWPKTDSSAGVDKAENPESVRFQAMRVGYFCLDEDTKKPNHLVLNRIVSLREDSAKNKN.

A disordered region spans residues 190-217; it reads DAAAGKKKGAKAKNSKQKTVDSGKAKEQ. The segment covering 194 to 205 has biased composition (basic residues); sequence GKKKGAKAKNSK. Residues 207–217 are compositionally biased toward basic and acidic residues; it reads KTVDSGKAKEQ. Residues 269-279 carry the 'HIGH' region motif; it reads PEPNGYLHIGH. ATP is bound by residues 270–272 and 276–282; these read EPN and HIGHSKA. The L-glutamine site is built by D302 and Y447. ATP contacts are provided by residues T466, 495–496, and 503–505; these read RL and MSK. The short motif at 502 to 506 is the 'KMSKS' region element; that stretch reads LMSKR.

The protein belongs to the class-I aminoacyl-tRNA synthetase family.

The protein resides in the cytoplasm. It carries out the reaction tRNA(Gln) + L-glutamine + ATP = L-glutaminyl-tRNA(Gln) + AMP + diphosphate. This Schizosaccharomyces pombe (strain 972 / ATCC 24843) (Fission yeast) protein is Probable glutamine--tRNA ligase (qrs1).